The following is a 489-amino-acid chain: MPHAVALMVQGTTSDAGKSTLVAGLARVLFRRGVRIAPFKPQNMALNSAVTVDGGEIGRAQALQALAAGLEPHSDFNPVLLKPSTDVGAQVVIHGRVALSLSARDYHAYKPTAMAAVMASWDRLVTAYECVLVEGAGSPAEINLRDRDIANMGFAEAADVPVILVADIDRGGVFAHLVGTLELLSPSEQARVKGFVINRFRGDLGLLQPGLDWLEARTGRPVLGVLPYLHGLFLDAEDALADARAEKGETRLTVVAPVYPRISNHTDLDALRLHPQVDFRWVGPGQAMPPADLIVLPGSKSVQADLAWLRAQGWDAAILRHLRYGGKLAGICGGFQMLGGWLHDPLGLEGGAGSIAGLGLLDMETTLAAEKRLENVCGTLNLPRSPAAAGYEIHMGVSRGAALDRPALQFADGRGDGALSADGQILGTYLHGLFDTPAALSALLAWAGAGEVESVDLAARREADLDRLADAIERHLDLGRLFPAEWVRG.

Positions Arg-251–Ala-439 constitute a GATase cobBQ-type domain. The active-site Nucleophile is Cys-332. The active site involves His-431.

It belongs to the CobB/CobQ family. CobQ subfamily.

Its pathway is cofactor biosynthesis; adenosylcobalamin biosynthesis. Its function is as follows. Catalyzes amidations at positions B, D, E, and G on adenosylcobyrinic A,C-diamide. NH(2) groups are provided by glutamine, and one molecule of ATP is hydrogenolyzed for each amidation. The protein is Cobyric acid synthase of Aromatoleum aromaticum (strain DSM 19018 / LMG 30748 / EbN1) (Azoarcus sp. (strain EbN1)).